A 547-amino-acid chain; its full sequence is G protein-coupled receptor associated sorting protein 3 (547 aa).

The span at 1 to 10 shows a compositional bias: basic residues; the sequence is MAGTKNKTRA. Disordered stretches follow at residues 1-32 and 80-102; these read MAGTKNKTRAQAKTEKKAAIQAKAGAEREATG and TLGKAMGDFTPKAGNESTSSTCK.

The protein belongs to the GPRASP family. Homodimer. Highly expressed in brain. Not expressed in lung or liver. Down-regulated in brain from patients suffering from Alzheimer disease.

It is found in the cytoplasm. The protein resides in the nucleus. In terms of biological role, survival and differentiation promoting protein that plays a role in the regulation of neurosynaptogenesis. Induces phosphatase PP2A activity which results in APP dephosphorylation and inhibits BACE1-mediated processing of APP. In Homo sapiens (Human), this protein is G protein-coupled receptor associated sorting protein 3.